The following is a 318-amino-acid chain: Ribose-phosphate pyrophosphokinase 2 (318 aa).

ATP is bound at residue 96-101 (RQDKKD). Positions 128, 130, 139, and 143 each coordinate Mg(2+). Histidine 130 is an ATP binding site. The binding of phosphoribosylpyrophosphate stretch occupies residues 212 to 227 (KDRVAILVDDMADTCG).

This sequence belongs to the ribose-phosphate pyrophosphokinase family. As to quaternary structure, homodimer. The active form is probably a hexamer composed of 3 homodimers. Mg(2+) serves as cofactor.

The catalysed reaction is D-ribose 5-phosphate + ATP = 5-phospho-alpha-D-ribose 1-diphosphate + AMP + H(+). The protein operates within metabolic intermediate biosynthesis; 5-phospho-alpha-D-ribose 1-diphosphate biosynthesis; 5-phospho-alpha-D-ribose 1-diphosphate from D-ribose 5-phosphate (route I): step 1/1. Activated by magnesium and inorganic phosphate. Competitively or non-competitively inhibited by ADP, 2,3-bisphosphoglyceride or GDP. Catalyzes the synthesis of phosphoribosylpyrophosphate (PRPP) that is essential for nucleotide synthesis. This is Ribose-phosphate pyrophosphokinase 2 (prps2) from Xenopus laevis (African clawed frog).